The chain runs to 489 residues: Betaine aldehyde dehydrogenase (489 aa).

K(+) contacts are provided by Thr-26 and Asp-93. 150–152 (GAW) is a binding site for NAD(+). Catalysis depends on Lys-162, which acts as the Charge relay system. 176-179 (KPSE) is a binding site for NAD(+). Val-180 lines the K(+) pocket. Residue 229–232 (GVET) participates in NAD(+) binding. Residue Leu-245 coordinates K(+). The Proton acceptor role is filled by Glu-251. Gly-253, Cys-285, and Glu-386 together coordinate NAD(+). Cys-285 functions as the Nucleophile in the catalytic mechanism. Cys-285 bears the Cysteine sulfenic acid (-SOH) mark. 2 residues coordinate K(+): Lys-456 and Gly-459. Glu-463 functions as the Charge relay system in the catalytic mechanism.

This sequence belongs to the aldehyde dehydrogenase family. As to quaternary structure, dimer of dimers. The cofactor is K(+).

It catalyses the reaction betaine aldehyde + NAD(+) + H2O = glycine betaine + NADH + 2 H(+). The protein operates within amine and polyamine biosynthesis; betaine biosynthesis via choline pathway; betaine from betaine aldehyde: step 1/1. Involved in the biosynthesis of the osmoprotectant glycine betaine. Catalyzes the irreversible oxidation of betaine aldehyde to the corresponding acid. This is Betaine aldehyde dehydrogenase from Burkholderia lata (strain ATCC 17760 / DSM 23089 / LMG 22485 / NCIMB 9086 / R18194 / 383).